A 154-amino-acid polypeptide reads, in one-letter code: Prefoldin subunit 5 (154 aa).

An N-acetylalanine modification is found at Ala2. An N6-acetyllysine modification is found at Lys42. Phosphoserine is present on Ser56.

This sequence belongs to the prefoldin subunit alpha family. In terms of assembly, heterohexamer of two PFD-alpha type and four PFD-beta type subunits.

It is found in the nucleus. Functionally, binds specifically to cytosolic chaperonin (c-CPN) and transfers target proteins to it. Binds to nascent polypeptide chain and promotes folding in an environment in which there are many competing pathways for nonnative proteins. Represses the transcriptional activity of MYC. The protein is Prefoldin subunit 5 (PFDN5) of Pongo abelii (Sumatran orangutan).